Reading from the N-terminus, the 344-residue chain is Probable glucan endo-1,3-beta-glucosidase At4g16260 (344 aa).

A signal peptide spans 1–21; it reads MTTLFLLIALFITTILNPTSG. The active-site Proton donor is the Glu116. Glu257 serves as the catalytic Nucleophile.

It belongs to the glycosyl hydrolase 17 family. (Microbial infection) Interacts with the 30C02 effector protein (AC G3GD54) of the beet cyst nematode Heterodera schachtii. Interaction with the 30C02 effector protein may potentially suppress beta-1,3-glucanase activity and plant defense.

Its subcellular location is the secreted. The catalysed reaction is Hydrolysis of (1-&gt;3)-beta-D-glucosidic linkages in (1-&gt;3)-beta-D-glucans.. In terms of biological role, may be involved in plant defense against cyst nematode pathogens. This chain is Probable glucan endo-1,3-beta-glucosidase At4g16260, found in Arabidopsis thaliana (Mouse-ear cress).